The primary structure comprises 211 residues: Uracil phosphoribosyltransferase (211 aa).

5-phospho-alpha-D-ribose 1-diphosphate contacts are provided by residues Arg-77, Arg-102, and 129–137; that span reads DPMLATGGS. Uracil is bound by residues Ile-192 and 197 to 199; that span reads GDA. Asp-198 lines the 5-phospho-alpha-D-ribose 1-diphosphate pocket.

It belongs to the UPRTase family. Requires Mg(2+) as cofactor.

The enzyme catalyses UMP + diphosphate = 5-phospho-alpha-D-ribose 1-diphosphate + uracil. It participates in pyrimidine metabolism; UMP biosynthesis via salvage pathway; UMP from uracil: step 1/1. Its activity is regulated as follows. Allosterically activated by GTP. Functionally, catalyzes the conversion of uracil and 5-phospho-alpha-D-ribose 1-diphosphate (PRPP) to UMP and diphosphate. This Corynebacterium glutamicum (strain R) protein is Uracil phosphoribosyltransferase.